The primary structure comprises 662 residues: Probable lysophospholipase 3 (662 aa).

The signal sequence occupies residues 1–19; the sequence is MLFNCFGILALLQILPALA. Residues Asn74, Asn127, Asn162, Asn196, Asn266, Asn274, Asn303, Asn376, Asn406, Asn411, Asn483, Asn518, Asn523, Asn547, Asn556, Asn574, Asn596, and Asn613 are each glycosylated (N-linked (GlcNAc...) asparagine). The PLA2c domain occupies 76 to 617; it reads TCPSDYMLRP…EQYCWNGTTV (542 aa).

Belongs to the lysophospholipase family.

It localises to the secreted. It carries out the reaction a 1-acyl-sn-glycero-3-phosphocholine + H2O = sn-glycerol 3-phosphocholine + a fatty acid + H(+). Functionally, catalyzes the release of fatty acids from lysophospholipids. This chain is Probable lysophospholipase 3 (plb3), found in Schizosaccharomyces pombe (strain 972 / ATCC 24843) (Fission yeast).